We begin with the raw amino-acid sequence, 1257 residues long: Insulin receptor substrate 4 (1257 aa).

Residues 78 to 199 enclose the PH domain; that stretch reads EVCKRGYLRK…WYLLLSRLIL (122 aa). Positions 231–335 constitute an IRS-type PTB domain; that stretch reads YKDVWQVIVK…EKMRALCADE (105 aa). 3 disordered regions span residues 406–653, 678–921, and 1179–1257; these read VAHS…GGRF, IPEG…SSDY, and QDVA…KRGR. A compositionally biased stretch (basic residues) spans 408–424; sequence HSRRGRLHLPRGRRSRR. Positions 487–490 match the YXXM motif 1 motif; the sequence is YMPM. Residues 495-509 show a composition bias toward gly residues; it reads SGNGRGSGGGQGSNG. Positions 510 to 524 are enriched in low complexity; that stretch reads QGSSSHSSGGNQCSG. Composition is skewed to gly residues over residues 525–542 and 551–599; these read EGQG…GSGG and GTAG…SGKG. Positions 627–640 are enriched in pro residues; that stretch reads MPPPPPPPPPPPPA. Over residues 641-650 the composition is skewed to gly residues; sequence GGTGGKGKSG. Residues 678–800 form a CRK-binding region; it reads IPEGAARGPH…KNPRNPQGGS (123 aa). Short sequence motifs (YXXM motif) lie at residues 700 to 703, 717 to 720, and 743 to 746; these read YVPM, YMPM, and YMMM. Over residues 750–761 the composition is skewed to pro residues; the sequence is VSPPPAPSPPKA. Residues 763–774 are compositionally biased toward basic and acidic residues; the sequence is DTNKEDDSKDND. Positions 779 to 782 match the YXXM motif 5 motif; the sequence is YMFM. The span at 800 to 810 shows a compositional bias: low complexity; that stretch reads SSSKSWSSYFS. Over residues 815–826 the composition is skewed to polar residues; that stretch reads FRSSPLGQNDNS. Residues 828-831 carry the YXXM motif 6 motif; it reads YVPM. A compositionally biased stretch (basic and acidic residues) spans 840-855; the sequence is GLDKEVSYNWDPKDAA. The tract at residues 895–897 is GRB2-binding; the sequence is ITK. Tyr-921 is subject to Phosphotyrosine. Positions 921–924 match the YXXM motif 7 motif; that stretch reads YVNM. The segment covering 1236–1257 has biased composition (basic and acidic residues); that stretch reads DTHVRMDFARRDNQFDSPKRGR.

Interacts with SOCS6 in response to stimulation with either insulin or IGF1. Interacts with CRK and CRKL. Interaction with CRK is stronger than with CRKL. Interacts with CRK via the phosphorylated YXXM motifs. Interacts with GRB2 and PIK3R1. Interacts with PLC-gamma, SHC1, PTK6, PPP4C and NISCH. Interacts with ASB4; this interaction promotes IRS4 proteasomal degradation. Phosphorylated on tyrosine residues in response to both insulin and IGF1 signaling. Phosphorylated on Tyr-921 in response to FGF2 signaling. Phosphorylation of Tyr-921 is required for GRB2, phospholipase C-gamma and phosphatidylinositol 3-kinase interaction. Post-translationally, ubiquitinated in a ASB4-dependent manner, leading to proteasomal degradation. Expressed in myoblasts. Expressed in liver and hepatocellular carcinoma.

Its subcellular location is the cell membrane. Acts as an interface between multiple growth factor receptors possessing tyrosine kinase activity, such as insulin receptor, IGF1R and FGFR1, and a complex network of intracellular signaling molecules containing SH2 domains. Involved in the IGF1R mitogenic signaling pathway. Promotes the AKT1 signaling pathway and BAD phosphorylation during insulin stimulation without activation of RPS6KB1 or the inhibition of apoptosis. Interaction with GRB2 enhances insulin-stimulated mitogen-activated protein kinase activity. May be involved in nonreceptor tyrosine kinase signaling in myoblasts. Plays a pivotal role in the proliferation/differentiation of hepatoblastoma cell through EPHB2 activation upon IGF1 stimulation. May play a role in the signal transduction in response to insulin and to a lesser extent in response to IL4 and GH on mitogenesis. Plays a role in growth, reproduction and glucose homeostasis. May act as negative regulators of the IGF1 signaling pathway by suppressing the function of IRS1 and IRS2. This Homo sapiens (Human) protein is Insulin receptor substrate 4 (IRS4).